A 1140-amino-acid polypeptide reads, in one-letter code: Envelopment polyprotein (1140 aa).

Residues 1 to 17 form the signal peptide; it reads MVGWVCISLVVLATTTA. At 18-489 the chain is on the lumenal side; the sequence is GLTRNLYELK…VPGLHGWATT (472 aa). Disulfide bonds link Cys-30/Cys-155, Cys-64/Cys-161, Cys-113/Cys-132, Cys-137/Cys-142, Cys-179/Cys-189, and Cys-214/Cys-251. Asn-138 carries N-linked (GlcNAc...) asparagine; by host glycosylation. Asn-351 carries an N-linked (GlcNAc...) asparagine; by host glycan. 4 disulfides stabilise this stretch: Cys-380–Cys-439, Cys-384–Cys-393, Cys-409–Cys-428, and Cys-456–Cys-479. The N-linked (GlcNAc...) asparagine; by host glycan is linked to Asn-403. Residues 490 to 510 traverse the membrane as a helical segment; sequence ALLITFCFGWLLIPTITMIIL. At 511-631 the chain is on the cytoplasmic side; sequence KILRLLTFSC…LGVFRYKSRC (121 aa). The tract at residues 520-537 is binding to the ribonucleoprotein; the sequence is CSHYSTESKFKAILERVK. 2 consecutive CCHC-type zinc fingers follow at residues 549-569 and 574-595; these read CDVC…KKSC and CPYC…FSIC. Binding to the ribonucleoprotein stretches follow at residues 592–609, 596–607, and 615–629; these read FSIC…KKSL, KLTNRFQENLKK, and KQGC…RYKS. The tract at residues 611–638 is interaction with host TRAF3; it reads RPEVKQGCYRTLGVFRYKSRCYVGLVWG. One can recognise an ITAM domain in the interval 615–638; sequence KQGCYRTLGVFRYKSRCYVGLVWG. Phosphotyrosine; by host occurs at positions 619 and 632. The short motif at 619-622 is the YxxL element; it reads YRTL. A helical membrane pass occupies residues 632–652; the sequence is YVGLVWGVLLTTELIVWAASA. The Lumenal segment spans residues 653–1108; the sequence is DTPLMESGWS…EWLLGILNGN (456 aa). Disulfide bonds link Cys-739-Cys-774, Cys-743-Cys-781, Cys-755-Cys-888, Cys-769-Cys-899, Cys-784-Cys-907, Cys-810-Cys-819, Cys-827-Cys-836, and Cys-867-Cys-871. The fusion loop stretch occupies residues 761–781; it reads YQYETSWGCNPPDCPGVGTGC. N-linked (GlcNAc...) asparagine; by host glycosylation is present at Asn-931. 5 disulfide bridges follow: Cys-973–Cys-1003, Cys-996–Cys-1048, Cys-1013–Cys-1018, Cys-1049–Cys-1054, and Cys-1088–Cys-1092. Residues 1109 to 1129 form a helical membrane-spanning segment; the sequence is WVVVAVLIVILILSILLFSFF. A binding to the ribonucleoprotein region spans residues 1125-1140; it reads LFSFFCPIRGRKNKSN. The Cytoplasmic portion of the chain corresponds to 1130–1140; it reads CPIRGRKNKSN.

It belongs to the hantavirus envelope glycoprotein family. Homodimer. Homotetramer; forms heterotetrameric Gn-Gc spikes in the pre-fusion conformation. Interacts (via C-terminus) with the nucleoprotein. Interacts with host TUFM; this interaction contributes to the virus-induced degradation of mitochondria by autophagy, which leads to degradation of host MAVS and inhibition of type I interferon (IFN) responses. Interacts with host MAP1LC3B; this interaction contributes to the virus-induced degradation of mitochondria by autophagy, which leads to degradation of host MAVS and inhibition of type I interferon (IFN) responses. Interacts (via C-terminus) with host TRAF3 (via N-terminus); this interaction inhibits the formation of TRAF3-TBK1 complexes. As to quaternary structure, homodimer. Homotetramer; forms heterotetrameric Gn-Gc spikes in the pre-fusion conformation. Homotrimer; forms homotrimer in the post-fusion conformation at acidic pH. Interacts (via C-terminus) with the nucleoprotein. Envelope polyprotein precursor is quickly cleaved in vivo just after synthesis, presumably by host signal peptidase.

It is found in the virion membrane. The protein resides in the host cell surface. It localises to the host Golgi apparatus membrane. Its subcellular location is the host endoplasmic reticulum membrane. The protein localises to the host mitochondrion. Functionally, forms homotetramers with glycoprotein C at the surface of the virion. Attaches the virion to host cell receptors including integrin ITGAV/ITGB3. This attachment induces virion internalization predominantly through clathrin-dependent endocytosis. Mediates the assembly and budding of infectious virus particles through its interaction with the nucleocapsid protein and the viral genome. May dysregulate normal immune and endothelial cell responses through an ITAM motif. Translocates to mitochondria, binds to host TUFM and recruits MAP1LC3B. These interactions induce mitochondrial autophagy and therefore destruction of host MAVS leading to inhibition of type I interferon (IFN) responses. Concomitant breakdown of glycoprotein N is apparently prevented by the nucleoprotein that may inhibit Gn-stimulated autophagosome-lysosome fusion. Interacts with the viral genomic RNA. Inhibits the host RIG-I/TBK1 pathway by disrupting the formation of TBK1-TRAF3 complexes and downstream signaling responses required for IFN-beta transcription. In terms of biological role, forms homotetramers with glycoprotein N at the surface of the virion. Attaches the virion to host cell receptors including integrin ITGAV/ITGB3. This attachment induces virion internalization predominantly through clathrin-dependent endocytosis. Class II fusion protein that promotes fusion of viral membrane with host endosomal membrane after endocytosis of the virion. This is Envelopment polyprotein (GP) from Homo sapiens (Human).